A 474-amino-acid polypeptide reads, in one-letter code: Glutamate--tRNA ligase (474 aa).

Positions 9–19 (PSPTGYLHVGG) match the 'HIGH' region motif. Residues 240–244 (KLSKR) carry the 'KMSKS' region motif. Lys243 provides a ligand contact to ATP.

Belongs to the class-I aminoacyl-tRNA synthetase family. Glutamate--tRNA ligase type 1 subfamily. In terms of assembly, monomer.

It localises to the cytoplasm. It carries out the reaction tRNA(Glu) + L-glutamate + ATP = L-glutamyl-tRNA(Glu) + AMP + diphosphate. In terms of biological role, catalyzes the attachment of glutamate to tRNA(Glu) in a two-step reaction: glutamate is first activated by ATP to form Glu-AMP and then transferred to the acceptor end of tRNA(Glu). The protein is Glutamate--tRNA ligase of Vibrio vulnificus (strain YJ016).